A 159-amino-acid polypeptide reads, in one-letter code: Transmembrane protein 92 (159 aa).

Positions 1–26 (MSQAWVPGLAPTLLFSLLAGPQKIAA) are cleaved as a signal peptide. Residues 27-57 (KCGLILACPKGFKCCGDSCCQENELFPGPVR) are Extracellular-facing. Residues 58 to 78 (IFVIIFLVILSVFCICGLAKC) traverse the membrane as a helical segment. Residues 79-159 (FCRNCREPEP…DQRGIDNPAF (81 aa)) are Cytoplasmic-facing. The disordered stretch occupies residues 122 to 159 (EVILKPSLGPTPTEPPPPYSFRPEEYTGDQRGIDNPAF).

Its subcellular location is the membrane. The chain is Transmembrane protein 92 (TMEM92) from Homo sapiens (Human).